The chain runs to 360 residues: DNA replication and repair protein RecF (360 aa).

30 to 37 (GQNGSGKT) lines the ATP pocket.

It belongs to the RecF family.

The protein localises to the cytoplasm. In terms of biological role, the RecF protein is involved in DNA metabolism; it is required for DNA replication and normal SOS inducibility. RecF binds preferentially to single-stranded, linear DNA. It also seems to bind ATP. The sequence is that of DNA replication and repair protein RecF from Shewanella sp. (strain MR-7).